A 573-amino-acid chain; its full sequence is MTQISRQQYADLYGPTIGDKIRLGDSDLYVEIEKDLRATYGDELQYGGGKTLRDGMGSENFLTQEAGCLDLVITNVTVIDAIQGVVKADVGIRNGRIVGLGKAGNPSTMDGVTRGLVTGASTDAISGEHLILTAGGMDTHVHYIAPQQVEAALSNGITTLWGGGIGPVDGTNGVTTTNGPWNLEMMLRSIEGLPINFGIQGKGNSTGIAPLIEQLEAGAAGFKVHEDYGATPATIRACLSVADEYDVSVAVHTDTLNESGYVEDTIAAFDGRSVHTYHSEGAGGGHAPDLLKVVGQNNILPSSTNPTLPCGKNSVAELFDMIMVCHNLNPRIPSDVAFAESRVRAETIVAESVLHDMGAISMIGSDSQAMGRIGETYLRAIQTADAMKKARGPLPEDAPGNDNFRVLRYIAKVTINPALTAGVGDVIGSIESGKFADLVLWEPAFFGVKPKLVLKGGLVAWANMGDPNASLPTPQPMYYRPMFAAYGSALQKTSITFVSRAAYDKGVADRFGLQRLVMPVSGTRVIGKAHMVRNSYLPNIEVDPQTFAVKVDGVHATVKPPQSISLNQLYFFS.

The region spanning 135–573 is the Urease domain; that stretch reads GGMDTHVHYI…ISLNQLYFFS (439 aa). H140, H142, and K223 together coordinate Ni(2+). The residue at position 223 (K223) is an N6-carboxylysine. A substrate-binding site is contributed by H225. Residues H252 and H278 each coordinate Ni(2+). H326 (proton donor) is an active-site residue. D366 serves as a coordination point for Ni(2+).

This sequence belongs to the metallo-dependent hydrolases superfamily. Urease alpha subunit family. Heterotrimer of UreA (gamma), UreB (beta) and UreC (alpha) subunits. Three heterotrimers associate to form the active enzyme. It depends on Ni cation as a cofactor. Carboxylation allows a single lysine to coordinate two nickel ions.

The protein localises to the cytoplasm. It catalyses the reaction urea + 2 H2O + H(+) = hydrogencarbonate + 2 NH4(+). It functions in the pathway nitrogen metabolism; urea degradation; CO(2) and NH(3) from urea (urease route): step 1/1. The polypeptide is Urease subunit alpha 2 (Brucella melitensis biotype 1 (strain ATCC 23456 / CCUG 17765 / NCTC 10094 / 16M)).